The sequence spans 420 residues: Dynein axonemal assembly factor 4 (420 aa).

Residues 3 to 87 form the CS domain; sequence VRVSEFSWQQ…KEPVLWESLS (85 aa). Residues 7–103 form a mediates interaction with ESR1 and STUB1 region; it reads EFSWQQTPAA…EMMQRIREKS (97 aa). Over residues 165-192 the composition is skewed to basic and acidic residues; sequence CQKKADGQKRVQRKEKPLQGKQAEERGA. Residues 165-212 form a disordered region; the sequence is CQKKADGQKRVQRKEKPLQGKQAEERGALKPQSLPRKAPPTRLPTRGR. TPR repeat units lie at residues 288–321, 323–355, and 364–397; these read PDWL…NRKI, VLYL…LTPP, and MKAH…DPAN.

Interacts with ZMYND10. Interacts with STUB1. Interacts with ESR1 and ESR2. Interacts with DNAAF2. Interacts with CCT3, CCT4, CCT5 and CCT8. Interacts with DNAAF6/PIH1D3.

Its subcellular location is the nucleus. The protein resides in the cytoplasm. It is found in the cell projection. It localises to the neuron projection. The protein localises to the dynein axonemal particle. Functionally, involved in neuronal migration during development of the cerebral neocortex. May regulate the stability and proteasomal degradation of the estrogen receptors that play an important role in neuronal differentiation, survival and plasticity. Axonemal dynein assembly factor required for ciliary motility. The sequence is that of Dynein axonemal assembly factor 4 from Rattus norvegicus (Rat).